The following is a 530-amino-acid chain: Ubiquitin carboxyl-terminal hydrolase 17-like protein 17 (530 aa).

The region spanning 80 to 375 (AGLQNMGNTC…QAYVLFYIQK (296 aa)) is the USP domain. The active-site Nucleophile is cysteine 89. Histidine 334 serves as the catalytic Proton acceptor. Basic and acidic residues-rich tracts occupy residues 382 to 392 (SESVSRGREPR) and 398 to 411 (DTDR…LKRD). Disordered stretches follow at residues 382 to 411 (SESV…LKRD) and 477 to 530 (NHHP…LVCQ). Polar residues predominate over residues 493 to 505 (TPTHQESMNTGTL). Basic residues predominate over residues 510-524 (GRARRSKGKNKHSKR).

The protein belongs to the peptidase C19 family. USP17 subfamily.

It is found in the nucleus. The protein resides in the endoplasmic reticulum. The enzyme catalyses Thiol-dependent hydrolysis of ester, thioester, amide, peptide and isopeptide bonds formed by the C-terminal Gly of ubiquitin (a 76-residue protein attached to proteins as an intracellular targeting signal).. In terms of biological role, deubiquitinating enzyme that removes conjugated ubiquitin from specific proteins to regulate different cellular processes that may include cell proliferation, progression through the cell cycle, apoptosis, cell migration, and the cellular response to viral infection. The sequence is that of Ubiquitin carboxyl-terminal hydrolase 17-like protein 17 (USP17L17) from Homo sapiens (Human).